The sequence spans 533 residues: Thromboxane-A synthase (533 aa).

The Cytoplasmic segment spans residues 1–10 (MEVLGLLKFE). A helical membrane pass occupies residues 11–31 (VSGTIVTVTLLVALLALLKWY). The Lumenal portion of the chain corresponds to 32–75 (SMSAFSRLEKLGIRHPKPSPFVGNLMFFRQGFWESQLELRERYG). The chain crosses the membrane as a helical span at residues 76–96 (PLCGYYLGRRMHVVISEPDMI). Residues 97–223 (KQVLVENFSN…RRASTFCIPR (127 aa)) are Cytoplasmic-facing. A helical membrane pass occupies residues 224–244 (PLLVLILSFPSIMVPLARILP). At 245–335 (NKNRDELNGF…FTVDEIVGQA (91 aa)) the chain is on the lumenal side. A helical membrane pass occupies residues 336–356 (FLFLIAGHEVITNTLSFITYL). Residues 357–533 (LATHPDCQER…NGVYIKIVSR (177 aa)) are Cytoplasmic-facing. C479 serves as a coordination point for heme.

This sequence belongs to the cytochrome P450 family. Monomer. Heme serves as cofactor. Expressed primarily in lung, kidney, and spleen.

Its subcellular location is the endoplasmic reticulum membrane. The enzyme catalyses prostaglandin H2 = thromboxane A2. The catalysed reaction is prostaglandin H2 = (12S)-hydroxy-(5Z,8E,10E)-heptadecatrienoate + malonaldehyde. It carries out the reaction a hydroperoxyeicosatetraenoate = an oxoeicosatetraenoate + H2O. It catalyses the reaction (15S)-hydroperoxy-(5Z,8Z,11Z,13E)-eicosatetraenoate = 15-oxo-(5Z,8Z,11Z,13E)-eicosatetraenoate + H2O. The enzyme catalyses (15S)-hydroperoxy-(5Z,8Z,11Z,13E)-eicosatetraenoate + AH2 = (15S)-hydroxy-(5Z,8Z,11Z,13E)-eicosatetraenoate + A + H2O. In terms of biological role, catalyzes the conversion of prostaglandin H2 (PGH2) to thromboxane A2 (TXA2), a potent inducer of blood vessel constriction and platelet aggregation. Also cleaves PGH2 to 12-hydroxy-heptadecatrienoicacid (12-HHT) and malondialdehyde, which is known to act as a mediator of DNA damage. 12-HHT and malondialdehyde are formed stoichiometrically in the same amounts as TXA2. Additionally, displays dehydratase activity, toward (15S)-hydroperoxy-(5Z,8Z,11Z,13E)-eicosatetraenoate (15(S)-HPETE) producing 15-KETE and 15-HETE. In Mus musculus (Mouse), this protein is Thromboxane-A synthase (Tbxas1).